Consider the following 363-residue polypeptide: GDSL esterase/lipase At3g14220 (363 aa).

A signal peptide spans 1–28; it reads MAKNRNLVFFLGVLASFTLSSFPVTVSG. Ser-39 (nucleophile) is an active-site residue. Active-site residues include Asp-318 and His-321.

Belongs to the 'GDSL' lipolytic enzyme family.

Its subcellular location is the secreted. In Arabidopsis thaliana (Mouse-ear cress), this protein is GDSL esterase/lipase At3g14220.